We begin with the raw amino-acid sequence, 588 residues long: Autophagy-related protein 22-1 (588 aa).

The chain crosses the membrane as a helical span at residues 35–55 (YGWAAEVFTVCAMGSFLPITL). N-linked (GlcNAc...) asparagine glycosylation is present at N84. 3 helical membrane-spanning segments follow: residues 109–129 (TASF…ILII), 144–164 (LLVS…AVTP), and 168–188 (LLGG…FVLL). A glycan (N-linked (GlcNAc...) asparagine) is linked at N255. 8 helical membrane-spanning segments follow: residues 270–290 (GIGI…LVIV), 301–321 (LVLF…AFWL), 365–385 (ILLF…VSGT), 399–419 (AALG…AFSW), 434–454 (IIAC…GFIP), 471–493 (FPLG…SFFG), 507–527 (LYAI…GFIT), and 536–556 (AFFF…LVDA).

It belongs to the ATG22 family.

It is found in the vacuole membrane. Vacuolar effluxer which mediate the efflux of amino acids resulting from autophagic degradation. The release of autophagic amino acids allows the maintenance of protein synthesis and viability during nitrogen starvation. This Emericella nidulans (strain FGSC A4 / ATCC 38163 / CBS 112.46 / NRRL 194 / M139) (Aspergillus nidulans) protein is Autophagy-related protein 22-1 (atg22-1).